The primary structure comprises 428 residues: Enolase 2 (428 aa).

Gln-162 lines the (2R)-2-phosphoglycerate pocket. Glu-204 acts as the Proton donor in catalysis. The Mg(2+) site is built by Asp-241, Glu-285, and Asp-312. (2R)-2-phosphoglycerate-binding residues include Lys-337, Arg-366, Ser-367, and Lys-388. The Proton acceptor role is filled by Lys-337.

Belongs to the enolase family. It depends on Mg(2+) as a cofactor.

Its subcellular location is the cytoplasm. The protein localises to the secreted. It localises to the cell surface. It catalyses the reaction (2R)-2-phosphoglycerate = phosphoenolpyruvate + H2O. Its pathway is carbohydrate degradation; glycolysis; pyruvate from D-glyceraldehyde 3-phosphate: step 4/5. Catalyzes the reversible conversion of 2-phosphoglycerate (2-PG) into phosphoenolpyruvate (PEP). It is essential for the degradation of carbohydrates via glycolysis. This is Enolase 2 from Lactobacillus johnsonii (strain CNCM I-12250 / La1 / NCC 533).